The chain runs to 154 residues: MDFPQRVNGWALYAHPCFQETYDALVAEVETLKGKDPENYQRKAATKLLAVVHKVIEEHITVNPSSPAFRHGKSLGSGKNKDWSRVKFGAGRYRLFFRYSEKEKVIILGWMNDENTLRTYGKKTDAYTVFSKMLKRGHPPADWETLTRETEETH.

As to quaternary structure, homohexamer; forms a complex with PrlF (SohA) with stoichiometry PrlF(2)-YhaV(4), possibly as a YhaV(2)-PrlF(2)-YhaV(2) complex like the MazFE complex. May dimerize in solution.

In terms of biological role, toxic component of a type II toxin-antitoxin (TA) system. Has RNase activity in vitro. Acts as a transcription factor. The YhaV/PrlF complex binds the prlF-yhaV operon, probably negatively regulating its expression. This Escherichia coli O157:H7 protein is Toxin YhaV (yhaV).